The primary structure comprises 262 residues: Thrombin-like enzyme calobin-1 (262 aa).

Positions 1-18 are cleaved as a signal peptide; sequence MVLISVLANLLILQLSYA. Residues 19 to 24 constitute a propeptide that is removed on maturation; that stretch reads QKSSEL. The Peptidase S1 domain maps to 25–253; that stretch reads VIGGDECNIN…HLDWIQSIIA (229 aa). 6 disulfides stabilise this stretch: Cys-31–Cys-165, Cys-52–Cys-68, Cys-100–Cys-260, Cys-144–Cys-214, Cys-176–Cys-193, and Cys-204–Cys-229. His-67 serves as the catalytic Charge relay system. Asn-105 carries N-linked (GlcNAc...) asparagine glycosylation. The Charge relay system role is filled by Asp-112. Ser-208 acts as the Charge relay system in catalysis.

This sequence belongs to the peptidase S1 family. Snake venom subfamily. As to quaternary structure, monomer. Post-translationally, N-glycosylated. In terms of tissue distribution, expressed by the venom gland.

The protein resides in the secreted. Strongly inhibited by PMSF, and moderately by benzamidine and soybean trypsin inhibitor. Functionally, thrombin-like snake venom serine protease. Has a coagulant activity. Acts on alpha-chains of fibrinogen (FGA) generating fibrinopeptide A. This chain is Thrombin-like enzyme calobin-1, found in Gloydius ussuriensis (Ussuri mamushi).